The following is a 182-amino-acid chain: Translation initiation factor IF-3 (182 aa).

It belongs to the IF-3 family. As to quaternary structure, monomer.

The protein localises to the cytoplasm. In terms of biological role, IF-3 binds to the 30S ribosomal subunit and shifts the equilibrium between 70S ribosomes and their 50S and 30S subunits in favor of the free subunits, thus enhancing the availability of 30S subunits on which protein synthesis initiation begins. This is Translation initiation factor IF-3 from Tropheryma whipplei (strain TW08/27) (Whipple's bacillus).